Here is a 131-residue protein sequence, read N- to C-terminus: Lysosomal enzyme trafficking factor (131 aa).

Helical transmembrane passes span 8-28 (MGWI…YYVF) and 66-86 (LPFW…FLFL).

Belongs to the LYSET family.

It is found in the golgi apparatus membrane. Required for mannose-6-phosphate-dependent trafficking of lysosomal enzymes. LYSET bridges GlcNAc-1-phosphate transferase (GNPTAB), to the membrane-bound transcription factor site-1 protease (MBTPS1), thus allowing proteolytic activation of the GNPTAB. GNPTAB is involved in the regulation of M6P-dependent Golgi-to-lysosome trafficking of lysosomal enzymes. LYSET is thus an essential factor for maturation and delivery of lysosomal hydrolases. In Xenopus laevis (African clawed frog), this protein is Lysosomal enzyme trafficking factor (lyset-a).